The primary structure comprises 508 residues: Maturase K (508 aa).

The protein belongs to the intron maturase 2 family. MatK subfamily.

The protein resides in the plastid. Its subcellular location is the chloroplast. In terms of biological role, usually encoded in the trnK tRNA gene intron. Probably assists in splicing its own and other chloroplast group II introns. In Amburana cearensis (Cerejeira), this protein is Maturase K.